The following is a 454-amino-acid chain: Repulsive guidance molecule A (454 aa).

Residues 1–47 (MQPPRERLVVTGRAGWMGMGRGAGRSALGLWPTLAFLLCSFPAAISP) form the signal peptide. Positions 48-169 (CKILKCNSEF…NYTHCGLFGD (122 aa)) are cleaved as a propeptide — removed in mature form. The span at 114 to 126 (HNCSKDGPTSQPR) shows a compositional bias: polar residues. The interval 114–141 (HNCSKDGPTSQPRVRTLPPAGDSQERSD) is disordered. 2 N-linked (GlcNAc...) asparagine glycosylation sites follow: Asn-115 and Asn-160. Intrachain disulfides connect Cys-146-Cys-227 and Cys-164-Cys-316. Asn-388 is a glycosylation site (N-linked (GlcNAc...) asparagine). A lipid anchor (GPI-anchor amidated alanine) is attached at Ala-427. Positions 428–454 (AAATTFPLAPQILLGTIPLLVLLPVLW) are cleaved as a propeptide — removed in mature form.

This sequence belongs to the repulsive guidance molecule (RGM) family. As to quaternary structure, interacts with NEO1, BMP2 and BMP4. Post-translationally, autocatalytically cleaved at low pH; the two chains remain linked via two disulfide bonds. In terms of tissue distribution, expressed in gradient in periventricular layers of the developing nervous system. In adult, expressed in scattered cells throughout the brain.

Its subcellular location is the cell membrane. Member of the repulsive guidance molecule (RGM) family that performs several functions in the developing and adult nervous system. Regulates cephalic neural tube closure, inhibits neurite outgrowth and cortical neuron branching, and the formation of mature synapses. Binding to its receptor NEO1/neogenin induces activation of RHOA-ROCK1/Rho-kinase signaling pathway through UNC5B-ARHGEF12/LARG-PTK2/FAK1 cascade, leading to collapse of the neuronal growth cone and neurite outgrowth inhibition. Furthermore, RGMA binding to NEO1/neogenin leads to HRAS inactivation by influencing HRAS-PTK2/FAK1-AKT1 pathway. It also functions as a bone morphogenetic protein (BMP) coreceptor that may signal through SMAD1, SMAD5, and SMAD8. This chain is Repulsive guidance molecule A (Rgma), found in Mus musculus (Mouse).